The sequence spans 429 residues: MLILQLIAIFVLIGITAVFVAAEFAIVKIRGSKINQLIESGDSRALAAHKIISNLDEYLSACQLGITITALGLGWLGEPTFERFLHPLFTMTGIPEPFNHIVTFVVAFIIVTFLHVVMGELAPKTVSIQKAEAVSLWIAKPLIWFYKITYPFIKALNGSASFLVKLFGFHSVKEHQVVISEEELRLILSESYEKGEINQSEFRYVNKIFEFDNRVAREIMIPRTEIAVISLEQSLEEAIHHIINERYTRYPVIKDDKDHILGIINSKDMFKAYFLGQPIKLNQIMRPVIRVIESIPVQQLLIRMQKERIHMAILVDEYGGTAGLVTVEDIIEEIVGEIRDEYDQDETPHILKKGEHHYVMDGKALIDEVNDLLDIAIENEEIDTIAGWLLTQKMELKAGDVIHAEGCEFKILDAEDHHIRFVEIKKTDF.

Transmembrane regions (helical) follow at residues 1-21, 61-81, 101-121, and 133-153; these read MLIL…VFVA, ACQL…EPTF, IVTF…MGEL, and AVSL…YPFI. The 201-residue stretch at 1–201 folds into the CNNM transmembrane domain; it reads MLILQLIAIF…YEKGEINQSE (201 aa). CBS domains lie at 220 to 281 and 284 to 341; these read MIPR…PIKL and IMRP…IRDE.

This sequence belongs to the UPF0053 family.

It localises to the cell membrane. The polypeptide is UPF0053 protein YugS (yugS) (Bacillus subtilis (strain 168)).